Consider the following 362-residue polypeptide: Meiotic recombination protein SPO11-1 (362 aa).

Residues 8–142 form the Topo IIA-type catalytic domain; that stretch reads SESTNLLQRI…LNVVSVGNGL (135 aa). The active-site O-(5'-phospho-DNA)-tyrosine intermediate is the Y103. Mg(2+) contacts are provided by E189 and D241.

Belongs to the TOP6A family. As to quaternary structure, heterotetramer of 2 SPO11 (SPO11-1 and/or SPO11-2) and 2 MTOPVIB chains. Interacts with MTOPVIB. May form a heterodimer with SPO11-2. Interacts with PRD1. Does not interact with TOP6B. The cofactor is Mg(2+). In terms of tissue distribution, expressed in shoots, young seedlings, flowers and reproductive tissues. Not found in roots or rosette leaves.

Its subcellular location is the nucleus. The enzyme catalyses ATP-dependent breakage, passage and rejoining of double-stranded DNA.. Component of a topoisomerase 6 complex specifically required for meiotic recombination. Together with MTOPVIB, mediates DNA cleavage that forms the double-strand breaks (DSB) that initiate meiotic recombination. The complex promotes relaxation of negative and positive supercoiled DNA and DNA decatenation through cleavage and ligation cycles. This chain is Meiotic recombination protein SPO11-1, found in Arabidopsis thaliana (Mouse-ear cress).